A 100-amino-acid chain; its full sequence is Small ribosomal subunit protein uS14c (100 aa).

The protein belongs to the universal ribosomal protein uS14 family. Part of the 30S ribosomal subunit.

It localises to the plastid. The protein resides in the chloroplast. In terms of biological role, binds 16S rRNA, required for the assembly of 30S particles. The protein is Small ribosomal subunit protein uS14c of Adiantum capillus-veneris (Maidenhair fern).